We begin with the raw amino-acid sequence, 923 residues long: Protein prickle (923 aa).

A disordered region spans residues 1–196 (MSYPYQKSHH…HPFHSPASAA (196 aa)). Over residues 11–34 (QTQQPQQNGHPQHQLMLQQQQQAD) the composition is skewed to low complexity. A compositionally biased stretch (basic residues) spans 37–49 (PHHHHHHHVHHAT). Composition is skewed to low complexity over residues 59 to 73 (RSPL…LYSG) and 106 to 118 (MPGM…PPGM). Residues 122–134 (LGGGGGGGGGGSA) are compositionally biased toward gly residues. 2 stretches are compositionally biased toward low complexity: residues 152-169 (STVT…SARS) and 184-196 (SSHH…ASAA). The PET domain maps to 275-383 (GGGHNYSQSD…TVKQITTTLI (109 aa)). LIM zinc-binding domains are found at residues 382 to 446 (LICE…ETLK), 447 to 507 (PRCS…MFAE), and 508 to 570 (YCDY…GEPP). 2 disordered regions span residues 571–668 (TPSD…LDLT) and 703–867 (GPIA…SSAD). Residues 709–718 (NGNGPTGGGP) show a composition bias toward gly residues. Over residues 738 to 748 (ESPSFSGTNSP) the composition is skewed to polar residues. Positions 777-786 (HSIKEVRFEG) are enriched in basic and acidic residues. The span at 792–805 (LPRTKSYCQRNGGQ) shows a compositional bias: polar residues. Positions 817-827 (SDDDELAEDET) are enriched in acidic residues. Residues 840–852 (QREQQRPVDDSDA) show a composition bias toward basic and acidic residues. Positions 853–865 (RSVCSTCSSSSSS) are enriched in low complexity.

It belongs to the prickle / espinas / testin family. As to quaternary structure, interacts with dsh; PET and LIM domains interact with dsh DEP domain, in wing cells. Interacts with Vang in photoreceptor cells.

The protein localises to the cell membrane. In terms of biological role, acts in a planar cell polarity (PCP) complex; polarization along the apical/basal axis of epithelial cells. PCP signaling in the wing disk requires the receptor fz and the cytoplasmic proteins dsh and pk. These act in a feedback loop leading to activation of the jnk cascade and subsequent polarized arrangement of hairs and bristles. Dgo and pk compete with one another for dsh binding, thereby modulating fz dsh activity and ensuring tight control over fz PCP signaling. Vang, stan and pk function together to regulate the establishment of tissue polarity in the adult eye. The polypeptide is Protein prickle (Anopheles gambiae (African malaria mosquito)).